Reading from the N-terminus, the 231-residue chain is Biosynthetic peptidoglycan transglycosylase (231 aa).

A helical transmembrane segment spans residues 7–27 (LLFWLIVVPVLLVLLLQLYFF).

It belongs to the glycosyltransferase 51 family.

The protein resides in the cell inner membrane. The catalysed reaction is [GlcNAc-(1-&gt;4)-Mur2Ac(oyl-L-Ala-gamma-D-Glu-L-Lys-D-Ala-D-Ala)](n)-di-trans,octa-cis-undecaprenyl diphosphate + beta-D-GlcNAc-(1-&gt;4)-Mur2Ac(oyl-L-Ala-gamma-D-Glu-L-Lys-D-Ala-D-Ala)-di-trans,octa-cis-undecaprenyl diphosphate = [GlcNAc-(1-&gt;4)-Mur2Ac(oyl-L-Ala-gamma-D-Glu-L-Lys-D-Ala-D-Ala)](n+1)-di-trans,octa-cis-undecaprenyl diphosphate + di-trans,octa-cis-undecaprenyl diphosphate + H(+). Its pathway is cell wall biogenesis; peptidoglycan biosynthesis. Functionally, peptidoglycan polymerase that catalyzes glycan chain elongation from lipid-linked precursors. This chain is Biosynthetic peptidoglycan transglycosylase, found in Janthinobacterium sp. (strain Marseille) (Minibacterium massiliensis).